Reading from the N-terminus, the 416-residue chain is Sulfoquinovosyl glycerol-binding protein SmoF (416 aa).

Residues 1–29 form the signal peptide; sequence MTLKTIRGKALMGAALCATMLTFSGQAFA. Position 40 (Gln40) interacts with 3-(6-sulfo-alpha-D-quinovosyl)glycerol. 6-sulfo-D-quinovose is bound at residue His41. 3-(6-sulfo-alpha-D-quinovosyl)glycerol contacts are provided by Ser71, Asp95, Asp141, Gly194, Thr248, Gly303, Trp304, and Arg373. 3 residues coordinate 6-sulfo-D-quinovose: Gly303, Trp304, and Arg373.

Belongs to the bacterial solute-binding protein 1 family. In terms of assembly, the complex is probably composed of two ATP-binding proteins (SmoE), two transmembrane proteins (SmoG and SmoH) and a solute-binding protein (SmoF).

It is found in the periplasm. Part of the ABC transporter complex SmoEFGH involved in sulfoquinovosyl glycerol (SQGro) uptake. Binds sulfoquinovosyl glycerol (SQGro). Can also bind sulfoquinovose (SQ), methyl alpha-sulfoquinovoside (SQMe) and a short-chain derivative of sulfoquinovosyl diacylglycerol (SQDG). Cannot bind D-glucose and D-glucuronic acid. This Agrobacterium fabrum (strain C58 / ATCC 33970) (Agrobacterium tumefaciens (strain C58)) protein is Sulfoquinovosyl glycerol-binding protein SmoF.